The chain runs to 208 residues: Cytochrome c oxidase assembly protein CtaG (208 aa).

The Cytoplasmic portion of the chain corresponds to 1 to 19; the sequence is MSPPLPQAPQQPAPRRGLG. The chain crosses the membrane as a helical; Signal-anchor for type II membrane protein span at residues 20–42; it reads HDTAVAAVCGLVVALMVGASFAA. The Periplasmic segment spans residues 43–208; it reads VPFYNWFCRT…SEPAPRKGNL (166 aa).

This sequence belongs to the COX11/CtaG family.

Its subcellular location is the cell inner membrane. Functionally, exerts its effect at some terminal stage of cytochrome c oxidase synthesis, probably by being involved in the insertion of the copper B into subunit I. This chain is Cytochrome c oxidase assembly protein CtaG, found in Rhodopseudomonas palustris (strain TIE-1).